We begin with the raw amino-acid sequence, 249 residues long: tRNA pseudouridine synthase A (249 aa).

Asp54 (nucleophile) is an active-site residue. Substrate is bound at residue Tyr112.

It belongs to the tRNA pseudouridine synthase TruA family. In terms of assembly, homodimer.

It carries out the reaction uridine(38/39/40) in tRNA = pseudouridine(38/39/40) in tRNA. In terms of biological role, formation of pseudouridine at positions 38, 39 and 40 in the anticodon stem and loop of transfer RNAs. This chain is tRNA pseudouridine synthase A, found in Latilactobacillus sakei subsp. sakei (strain 23K) (Lactobacillus sakei subsp. sakei).